A 391-amino-acid chain; its full sequence is Tumor susceptibility gene 101 protein (391 aa).

Ala2 carries the N-acetylalanine modification. The 144-residue stretch at 2-145 folds into the UEV domain; the sequence is AVSESQLKKM…GEEPPVFSRP (144 aa). The interaction with CEP55 stretch occupies residues 159–163; the sequence is PPNTS. Positions 197–220 are disordered; sequence YPATTSSQYPSQPPVTTVGPSRDG. The span at 200 to 215 shows a compositional bias: polar residues; sequence TTSSQYPSQPPVTTVG. Thr221 bears the Phosphothreonine mark. Residues 237 to 317 adopt a coiled-coil conformation; that stretch reads DKLRWRMKEE…NQSENNDIDE (81 aa). The PTAP/PSAP motif motif lies at 321–324; sequence PTAP. One can recognise an SB domain in the interval 323 to 391; sequence APLYKQILNL…RKTAGLSDLY (69 aa).

Belongs to the ubiquitin-conjugating enzyme family. UEV subfamily. As to quaternary structure, component of the ESCRT-I complex (endosomal sorting complex required for transport I) which consists of TSG101, VPS28, a VPS37 protein (VPS37A to -D) and MVB12A or MVB12B in a 1:1:1:1 stoichiometry. Interacts with VPS37A, VPS37B and VPS37C. Component of an ESCRT-I complex (endosomal sorting complex required for transport I) which consists of TSG101, VPS28, VPS37A and UBAP1 in a 1:1:1:1 stoichiometry. Interacts with DMAP1. Interacts with GMCL. Interacts with ubiquitin, stathmin and AATF. Interacts with HGS; the interaction mediates the association with the ESCRT-0 complex. Interacts with GGA1 and GGA3. Interacts (via UEV domain) with PDCD6IP/AIP1. Interacts with VPS28, SNF8 and VPS36. Self-associates. Interacts with MVB12A; the association appears to be mediated by the TSG101-VPS37 binary subcomplex. Interacts with VPS37D. Interacts with LRSAM1. Interacts with CEP55; the interaction is required for cytokinesis. Interacts with PDCD6. Interacts with LITAF. Interacts with murine leukemia virus Gag polyprotein (via PSAP motif). Interacts with MGRN1. Interacts with ARRDC1; recruits TSG101 to the plasma membrane. Post-translationally, monoubiquitinated at multiple sites by LRSAM1 and by MGRN1. Ubiquitination inactivates it, possibly by regulating its shuttling between an active membrane-bound protein and an inactive soluble form. Ubiquitination by MGRN1 requires the presence of UBE2D1. As to expression, ubiquitous. Higher expression in brain and mammary gland. Lower expression in liver and tumoral tissues.

The protein resides in the cytoplasm. Its subcellular location is the early endosome membrane. It localises to the late endosome membrane. The protein localises to the cytoskeleton. It is found in the microtubule organizing center. The protein resides in the centrosome. Its subcellular location is the midbody. It localises to the midbody ring. The protein localises to the nucleus. Its function is as follows. Component of the ESCRT-I complex, a regulator of vesicular trafficking process. Binds to ubiquitinated cargo proteins and is required for the sorting of endocytic ubiquitinated cargos into multivesicular bodies (MVBs). Mediates the association between the ESCRT-0 and ESCRT-I complex. Required for completion of cytokinesis; the function requires CEP55. May be involved in cell growth and differentiation. Acts as a negative growth regulator. Required for the exosomal release of SDCBP, CD63 and syndecan. It may also play a role in the extracellular release of microvesicles that differ from the exosomes. The chain is Tumor susceptibility gene 101 protein (Tsg101) from Mus musculus (Mouse).